A 340-amino-acid chain; its full sequence is tRNA N6-adenosine threonylcarbamoyltransferase (340 aa).

Residues H115 and H119 each contribute to the Fe cation site. Residues V138–G142, D171, G184, D188, and N278 each bind substrate. D306 serves as a coordination point for Fe cation.

This sequence belongs to the KAE1 / TsaD family. Requires Fe(2+) as cofactor.

The protein localises to the cytoplasm. It catalyses the reaction L-threonylcarbamoyladenylate + adenosine(37) in tRNA = N(6)-L-threonylcarbamoyladenosine(37) in tRNA + AMP + H(+). In terms of biological role, required for the formation of a threonylcarbamoyl group on adenosine at position 37 (t(6)A37) in tRNAs that read codons beginning with adenine. Is involved in the transfer of the threonylcarbamoyl moiety of threonylcarbamoyl-AMP (TC-AMP) to the N6 group of A37, together with TsaE and TsaB. TsaD likely plays a direct catalytic role in this reaction. In Clostridium botulinum (strain Kyoto / Type A2), this protein is tRNA N6-adenosine threonylcarbamoyltransferase.